Consider the following 515-residue polypeptide: RNA exonuclease NGL2 (515 aa).

Disordered stretches follow at residues 1 to 54 (MTQD…SKPI) and 353 to 381 (RDGEEGADDEEGGNIEKYGKDQPESPVPE). Basic and acidic residues predominate over residues 21-34 (EINKSVKDAKHQTN). A compositionally biased stretch (basic residues) spans 40-52 (QHKKKGKKGKKSK). Basic and acidic residues predominate over residues 369-381 (KYGKDQPESPVPE).

This sequence belongs to the CCR4/nocturin family.

It is found in the cytoplasm. Its subcellular location is the nucleus. Functionally, involved in pre-rRNA processing. Required for the final stage of 3'-end maturation of 5.8S rRNA at site E. This is RNA exonuclease NGL2 (NGL2) from Saccharomyces cerevisiae (strain ATCC 204508 / S288c) (Baker's yeast).